The primary structure comprises 192 residues: Shikimate kinase (192 aa).

An ATP-binding site is contributed by 26-31 (ASGKSS). Serine 30 contributes to the Mg(2+) binding site. 3 residues coordinate substrate: aspartate 48, arginine 72, and glycine 94. Position 132 (arginine 132) interacts with ATP. Arginine 151 contacts substrate.

Belongs to the shikimate kinase family. As to quaternary structure, monomer. Mg(2+) serves as cofactor.

Its subcellular location is the cytoplasm. The catalysed reaction is shikimate + ATP = 3-phosphoshikimate + ADP + H(+). It participates in metabolic intermediate biosynthesis; chorismate biosynthesis; chorismate from D-erythrose 4-phosphate and phosphoenolpyruvate: step 5/7. Catalyzes the specific phosphorylation of the 3-hydroxyl group of shikimic acid using ATP as a cosubstrate. This chain is Shikimate kinase, found in Prochlorococcus marinus (strain MIT 9313).